We begin with the raw amino-acid sequence, 589 residues long: Oligo-1,6-glucosidase IMA3 (589 aa).

D215 (nucleophile) is an active-site residue. The active-site Proton donor is E277.

Belongs to the glycosyl hydrolase 13 family.

It localises to the cytoplasm. The catalysed reaction is Hydrolysis of (1-&gt;6)-alpha-D-glucosidic linkages in some oligosaccharides produced from starch and glycogen by alpha-amylase, and in isomaltose.. In terms of biological role, alpha-glucosidase with broad substrate specificity for alpha-1,4- and alpha-1,6-glucosides. Not required for isomaltose utilization, but overexpression allows the IMA1 null mutant to grow on isomaltose. This is Oligo-1,6-glucosidase IMA3 (IMA3) from Saccharomyces cerevisiae (strain ATCC 204508 / S288c) (Baker's yeast).